The sequence spans 610 residues: Glutamine--fructose-6-phosphate aminotransferase [isomerizing] (610 aa).

Residue cysteine 2 is the Nucleophile; for GATase activity of the active site. Residues 2–221 (CGIVGAVAQR…DGDVVDLQLA (220 aa)) form the Glutamine amidotransferase type-2 domain. 2 SIS domains span residues 286-426 (AYKV…TRGR) and 459-600 (WADR…VDKP). The For Fru-6P isomerization activity role is filled by lysine 605.

In terms of assembly, homodimer.

The protein localises to the cytoplasm. The enzyme catalyses D-fructose 6-phosphate + L-glutamine = D-glucosamine 6-phosphate + L-glutamate. In terms of biological role, catalyzes the first step in hexosamine metabolism, converting fructose-6P into glucosamine-6P using glutamine as a nitrogen source. The sequence is that of Glutamine--fructose-6-phosphate aminotransferase [isomerizing] from Bordetella pertussis (strain Tohama I / ATCC BAA-589 / NCTC 13251).